We begin with the raw amino-acid sequence, 359 residues long: Protein trichome birefringence-like 42 (359 aa).

Residues 7 to 25 (LFLLLLIFLVDLSDYGVLA) traverse the membrane as a helical; Signal-anchor for type II membrane protein segment. Positions 110–112 (GDS) match the GDS motif motif. Positions 335–349 (DCSHWCLPGVPDAWN) match the DCXHWCLPGXXDXWN motif motif.

Belongs to the PC-esterase family. TBL subfamily.

It localises to the membrane. Functionally, may act as a bridging protein that binds pectin and other cell wall polysaccharides. Probably involved in maintaining esterification of pectins. May be involved in the specific O-acetylation of cell wall polymers. The sequence is that of Protein trichome birefringence-like 42 (TBL42) from Arabidopsis thaliana (Mouse-ear cress).